A 203-amino-acid chain; its full sequence is Glycerol-3-phosphate acyltransferase (203 aa).

The next 5 membrane-spanning stretches (helical) occupy residues 5 to 25, 55 to 75, 88 to 108, 114 to 134, and 162 to 182; these read VLGL…FGVV, KLGI…ILVA, FTVL…WLGF, VATG…AGAV, and FVAH…AALI.

This sequence belongs to the PlsY family. Probably interacts with PlsX.

It is found in the cell inner membrane. The enzyme catalyses an acyl phosphate + sn-glycerol 3-phosphate = a 1-acyl-sn-glycero-3-phosphate + phosphate. It functions in the pathway lipid metabolism; phospholipid metabolism. Its function is as follows. Catalyzes the transfer of an acyl group from acyl-phosphate (acyl-PO(4)) to glycerol-3-phosphate (G3P) to form lysophosphatidic acid (LPA). This enzyme utilizes acyl-phosphate as fatty acyl donor, but not acyl-CoA or acyl-ACP. The sequence is that of Glycerol-3-phosphate acyltransferase from Anaeromyxobacter sp. (strain Fw109-5).